Here is a 426-residue protein sequence, read N- to C-terminus: Transcription termination factor Rho (426 aa).

The 74-residue stretch at 58–131 (QSLARGYLDI…VRVEAVNGLD (74 aa)) folds into the Rho RNA-BD domain. ATP is bound by residues 176–181 (GRGQRA), 188–193 (KAGKTT), and Arg-219.

Belongs to the Rho family. As to quaternary structure, homohexamer. The homohexamer assembles into an open ring structure.

Functionally, facilitates transcription termination by a mechanism that involves Rho binding to the nascent RNA, activation of Rho's RNA-dependent ATPase activity, and release of the mRNA from the DNA template. The polypeptide is Transcription termination factor Rho (Deinococcus radiodurans (strain ATCC 13939 / DSM 20539 / JCM 16871 / CCUG 27074 / LMG 4051 / NBRC 15346 / NCIMB 9279 / VKM B-1422 / R1)).